We begin with the raw amino-acid sequence, 294 residues long: Protoheme IX farnesyltransferase (294 aa).

The next 9 helical transmembrane spans lie at 24 to 44 (VVLL…PGWV), 48 to 68 (LIAF…AINH), 96 to 116 (ALWF…LFVN), 118 to 138 (LTAL…TGYL), 145 to 165 (NIVI…TAVT), 172 to 192 (ALLL…ALAI), 211 to 231 (GIQF…VVSL), 241 to 263 (WIYL…KLYF), and 268 to 288 (VVAM…FVFL).

Belongs to the UbiA prenyltransferase family. Protoheme IX farnesyltransferase subfamily.

The protein resides in the cell inner membrane. It catalyses the reaction heme b + (2E,6E)-farnesyl diphosphate + H2O = Fe(II)-heme o + diphosphate. It participates in porphyrin-containing compound metabolism; heme O biosynthesis; heme O from protoheme: step 1/1. Its function is as follows. Converts heme B (protoheme IX) to heme O by substitution of the vinyl group on carbon 2 of heme B porphyrin ring with a hydroxyethyl farnesyl side group. The chain is Protoheme IX farnesyltransferase from Legionella pneumophila (strain Lens).